We begin with the raw amino-acid sequence, 223 residues long: Octanoyltransferase (223 aa).

Residues D32 to D207 enclose the BPL/LPL catalytic domain. Residues R71–H78, S138–G140, and G151–A153 each bind substrate. C169 (acyl-thioester intermediate) is an active-site residue.

It belongs to the LipB family.

Its subcellular location is the cytoplasm. The catalysed reaction is octanoyl-[ACP] + L-lysyl-[protein] = N(6)-octanoyl-L-lysyl-[protein] + holo-[ACP] + H(+). It functions in the pathway protein modification; protein lipoylation via endogenous pathway; protein N(6)-(lipoyl)lysine from octanoyl-[acyl-carrier-protein]: step 1/2. In terms of biological role, catalyzes the transfer of endogenously produced octanoic acid from octanoyl-acyl-carrier-protein onto the lipoyl domains of lipoate-dependent enzymes. Lipoyl-ACP can also act as a substrate although octanoyl-ACP is likely to be the physiological substrate. In Erwinia tasmaniensis (strain DSM 17950 / CFBP 7177 / CIP 109463 / NCPPB 4357 / Et1/99), this protein is Octanoyltransferase.